Here is an 85-residue protein sequence, read N- to C-terminus: Small ribosomal subunit protein bS16c (85 aa).

This sequence belongs to the bacterial ribosomal protein bS16 family.

It localises to the plastid. It is found in the chloroplast. The polypeptide is Small ribosomal subunit protein bS16c (Nicotiana tabacum (Common tobacco)).